The following is a 383-amino-acid chain: Dimethylsulfoniopropionate lyase 6 (383 aa).

The protein belongs to the aspartate/glutamate racemases family. ALMA1 subfamily. As to quaternary structure, homotetramer.

The enzyme catalyses S,S-dimethyl-beta-propiothetin = acrylate + dimethyl sulfide + H(+). Functionally, mediates cleavage of dimethylsulfoniopropionate (DMSP) into dimethyl sulfide (DMS) and acrylate. DMS is the principal form by which sulfur is transported from oceans to the atmosphere and is a key component of the ocean sulfur cycle. This is Dimethylsulfoniopropionate lyase 6 from Emiliania huxleyi (strain CCMP1516).